Reading from the N-terminus, the 254-residue chain is Phosphoribosylaminoimidazole-succinocarboxamide synthase (254 aa).

This sequence belongs to the SAICAR synthetase family.

It carries out the reaction 5-amino-1-(5-phospho-D-ribosyl)imidazole-4-carboxylate + L-aspartate + ATP = (2S)-2-[5-amino-1-(5-phospho-beta-D-ribosyl)imidazole-4-carboxamido]succinate + ADP + phosphate + 2 H(+). Its pathway is purine metabolism; IMP biosynthesis via de novo pathway; 5-amino-1-(5-phospho-D-ribosyl)imidazole-4-carboxamide from 5-amino-1-(5-phospho-D-ribosyl)imidazole-4-carboxylate: step 1/2. This Sinorhizobium medicae (strain WSM419) (Ensifer medicae) protein is Phosphoribosylaminoimidazole-succinocarboxamide synthase.